We begin with the raw amino-acid sequence, 289 residues long: Phosphatidylserine decarboxylase proenzyme (289 aa).

Residues D92, H149, and S254 each act as charge relay system; for autoendoproteolytic cleavage activity in the active site. The active-site Schiff-base intermediate with substrate; via pyruvic acid; for decarboxylase activity is the S254. Pyruvic acid (Ser); by autocatalysis is present on S254.

It belongs to the phosphatidylserine decarboxylase family. PSD-B subfamily. Prokaryotic type I sub-subfamily. As to quaternary structure, heterodimer of a large membrane-associated beta subunit and a small pyruvoyl-containing alpha subunit. It depends on pyruvate as a cofactor. In terms of processing, is synthesized initially as an inactive proenzyme. Formation of the active enzyme involves a self-maturation process in which the active site pyruvoyl group is generated from an internal serine residue via an autocatalytic post-translational modification. Two non-identical subunits are generated from the proenzyme in this reaction, and the pyruvate is formed at the N-terminus of the alpha chain, which is derived from the carboxyl end of the proenzyme. The autoendoproteolytic cleavage occurs by a canonical serine protease mechanism, in which the side chain hydroxyl group of the serine supplies its oxygen atom to form the C-terminus of the beta chain, while the remainder of the serine residue undergoes an oxidative deamination to produce ammonia and the pyruvoyl prosthetic group on the alpha chain. During this reaction, the Ser that is part of the protease active site of the proenzyme becomes the pyruvoyl prosthetic group, which constitutes an essential element of the active site of the mature decarboxylase.

The protein localises to the cell membrane. The enzyme catalyses a 1,2-diacyl-sn-glycero-3-phospho-L-serine + H(+) = a 1,2-diacyl-sn-glycero-3-phosphoethanolamine + CO2. Its pathway is phospholipid metabolism; phosphatidylethanolamine biosynthesis; phosphatidylethanolamine from CDP-diacylglycerol: step 2/2. Functionally, catalyzes the formation of phosphatidylethanolamine (PtdEtn) from phosphatidylserine (PtdSer). The protein is Phosphatidylserine decarboxylase proenzyme of Pseudomonas paraeruginosa (strain DSM 24068 / PA7) (Pseudomonas aeruginosa (strain PA7)).